The chain runs to 348 residues: Ion-translocating oxidoreductase complex subunit D (348 aa).

At 1–22 (MAFFIASSPHLRSKRSTADVMR) the chain is on the cytoplasmic side. The next 2 membrane-spanning stretches (helical) occupy residues 23 to 43 (WVLV…GYGT) and 44 to 64 (LIQL…IMLL). Residues 65 to 71 (RKRSPIS) are Cytoplasmic-facing. Residues 72-91 (ALRDYSAVVTAWLLAVAIPP) traverse the membrane as a helical segment. Topologically, residues 92–94 (LSP) are periplasmic. Residues 95–117 (WWVVVIGLIFAIVIAKHLYGGLG) form a helical membrane-spanning segment. Topologically, residues 118-125 (QNPFNPAM) are cytoplasmic. The chain crosses the membrane as a helical span at residues 126–146 (IAYVVLLISFPVQMTSWMAPI). The Periplasmic segment spans residues 147–213 (KLTAEPSSLV…ETLTQPQFSG (67 aa)). Thr187 carries the FMN phosphoryl threonine modification. Residues 214-234 (FAGIGWEWVNIAYLLGGLILL) traverse the membrane as a helical segment. At 235–242 (KLRIIRWH) the chain is on the cytoplasmic side. The helical transmembrane segment at 243-263 (IPVAMLAGLVFTALLAQLFAP) threads the bilayer. Residues 264–265 (GT) lie on the Periplasmic side of the membrane. The chain crosses the membrane as a helical span at residues 266 to 286 (TASPMIHLLSGATMLGAFFIA). Residues 287–299 (TDPVSASTTDKGR) lie on the Cytoplasmic side of the membrane. 2 consecutive transmembrane segments (helical) span residues 300–320 (LIYG…GGFP) and 321–341 (DGVA…DYYT). At 342-348 (KPRTYGH) the chain is on the cytoplasmic side.

This sequence belongs to the NqrB/RnfD family. The complex is composed of six subunits: RnfA, RnfB, RnfC, RnfD, RnfE and RnfG. FMN serves as cofactor.

The protein resides in the cell inner membrane. Part of a membrane-bound complex that couples electron transfer with translocation of ions across the membrane. This is Ion-translocating oxidoreductase complex subunit D from Vibrio cholerae serotype O1 (strain ATCC 39541 / Classical Ogawa 395 / O395).